The chain runs to 273 residues: Type II pantothenate kinase (273 aa).

8–15 (DAGGTLTK) serves as a coordination point for ATP. The active-site Proton acceptor is Glu-76. ATP contacts are provided by residues Thr-105, 127-131 (GGTIM), Phe-143, and Ser-230.

It belongs to the type II pantothenate kinase family. In terms of assembly, homodimer.

It localises to the cytoplasm. The enzyme catalyses (R)-pantothenate + ATP = (R)-4'-phosphopantothenate + ADP + H(+). It participates in cofactor biosynthesis; coenzyme A biosynthesis; CoA from (R)-pantothenate: step 1/5. Functionally, catalyzes the phosphorylation of pantothenate (Pan), the first step in CoA biosynthesis. In Bacillus cereus (strain G9842), this protein is Type II pantothenate kinase.